The following is an 890-amino-acid chain: V-type proton ATPase subunit a, Golgi isoform (890 aa).

Met1 is subject to N-acetylmethionine. Residues 1-450 (MNQEEAIFRS…DAYGIATYKE (450 aa)) lie on the Cytoplasmic side of the membrane. A coiled-coil region spans residues 113-154 (LENVNDMVKEITDCESRARQLDESLDSLRSKLNDLLEQRQVI). Phosphoserine is present on residues Ser223 and Ser228. Positions 297–347 (LKKVKRVIDSLNGKIVSLNTRSSELVDTLNRQIDDLQRILDTTEQTLHTEL) form a coiled coil. A helical transmembrane segment spans residues 451 to 469 (INAGLATVVTFPFMFAIMF). Topologically, residues 470 to 471 (GD) are vacuolar. Residues 472–488 (MGHGFILFLMALFLVLN) traverse the membrane as a helical segment. The Cytoplasmic portion of the chain corresponds to 489–502 (ERKFGAMHRDEIFD). A helical transmembrane segment spans residues 503–532 (MAFTGRYVLLLMGAFSVYTGLLYNDIFSKS). The Vacuolar portion of the chain corresponds to 533–580 (MTIFKSGWQWPSTFRKGESIEAKKTGVYPFGLDFAWHGTDNGLLFSNS). The chain crosses the membrane as a helical span at residues 581-600 (YKMKLSILMGYAHMTYSFMF). At 601–618 (SYINYRAKNSKVDIIGNF) the chain is on the cytoplasmic side. A helical transmembrane segment spans residues 619-639 (IPGLVFMQSIFGYLSWAIVYK). Over 640–682 (WSKDWIKDDKPAPGLLNMLINMFLAPGTIDDQLYSGQAKLQVV) the chain is Vacuolar. Residues 683-702 (LLLAALVCVPWLLLYKPLTL) form a helical membrane-spanning segment. Topologically, residues 703-779 (RRLNKNGGGG…DVMIHQVIHT (77 aa)) are cytoplasmic. The chain crosses the membrane as a helical span at residues 780–804 (IEFCLNCISHTASYLRLWALSLAHA). The Vacuolar portion of the chain corresponds to 805 to 828 (QLSSVLWDMTISNAFSSKNSGSPL). The helical transmembrane segment at 829–867 (AVMKVVFLFAMWFVLTVCILVFMEGTSAMLHALRLHWVE) threads the bilayer. The Cytoplasmic portion of the chain corresponds to 868–890 (AMSKFFEGEGYAYEPFSFRAIIE).

This sequence belongs to the V-ATPase 116 kDa subunit family. V-ATPase is a heteromultimeric enzyme composed of a peripheral catalytic V1 complex (components A to H) attached to an integral membrane V0 proton pore complex (components: a, c, c', c'', d, e, f and VOA1). In terms of processing, glycosylated.

Its subcellular location is the endosome membrane. The protein localises to the golgi apparatus membrane. Subunit of the V0 complex of vacuolar(H+)-ATPase (V-ATPase), a multisubunit enzyme composed of a peripheral complex (V1) that hydrolyzes ATP and a membrane integral complex (V0) that translocates protons. V-ATPase is responsible for acidifying and maintaining the pH of intracellular compartments. Is present only in Golgi- and endosome-residing V-ATPase complexes; enzymes containing this subunit have a 4-fold lower ratio of proton transport to ATP hydrolysis than complexes containing the vacuolar isoform and do not dissociate V1 and V0 in response to glucose depletion. This Saccharomyces cerevisiae (strain ATCC 204508 / S288c) (Baker's yeast) protein is V-type proton ATPase subunit a, Golgi isoform (STV1).